The following is a 243-amino-acid chain: Orotidine 5'-phosphate decarboxylase (243 aa).

Substrate-binding positions include Asp19, Lys41, 69-78 (DLKFFDIPAT), Thr124, Arg185, Gln194, Gly214, and Arg215. The active-site Proton donor is the Lys71.

It belongs to the OMP decarboxylase family. Type 1 subfamily. Homodimer.

It catalyses the reaction orotidine 5'-phosphate + H(+) = UMP + CO2. It participates in pyrimidine metabolism; UMP biosynthesis via de novo pathway; UMP from orotate: step 2/2. In terms of biological role, catalyzes the decarboxylation of orotidine 5'-monophosphate (OMP) to uridine 5'-monophosphate (UMP). The chain is Orotidine 5'-phosphate decarboxylase from Xanthomonas oryzae pv. oryzae (strain MAFF 311018).